A 311-amino-acid polypeptide reads, in one-letter code: Thioredoxin reductase (311 aa).

FAD contacts are provided by residues 15-18 (SGPA), 37-44 (EGTQFGGA), N53, and V86. A disulfide bond links C137 and C140. The NADP(+) site is built by S158, H177, R183, I240, and Y260. FAD is bound by residues D280 and 287-290 (RQAI). Residue R287 participates in NADP(+) binding.

This sequence belongs to the class-II pyridine nucleotide-disulfide oxidoreductase family. As to quaternary structure, homodimer. FAD is required as a cofactor.

The protein resides in the cytoplasm. The catalysed reaction is [thioredoxin]-dithiol + NADP(+) = [thioredoxin]-disulfide + NADPH + H(+). The sequence is that of Thioredoxin reductase from Mycolicibacterium smegmatis (Mycobacterium smegmatis).